The following is a 91-amino-acid chain: Anther-specific protein RTS (91 aa).

Positions 1–21 (MVRVGAAAAVLVLAAAAAAMA) are cleaved as a signal peptide.

Functionally, required for tapetum and pollen development. This Oryza sativa subsp. japonica (Rice) protein is Anther-specific protein RTS.